The primary structure comprises 422 residues: Histidine--tRNA ligase (422 aa).

Belongs to the class-II aminoacyl-tRNA synthetase family. In terms of assembly, homodimer.

It localises to the cytoplasm. The enzyme catalyses tRNA(His) + L-histidine + ATP = L-histidyl-tRNA(His) + AMP + diphosphate + H(+). This Vibrio atlanticus (strain LGP32) (Vibrio splendidus (strain Mel32)) protein is Histidine--tRNA ligase.